Here is a 285-residue protein sequence, read N- to C-terminus: Diphthine methyl ester synthase (285 aa).

Residues Leu-9, Asp-84, Gly-87, 112–113, Leu-163, Val-221, and His-246 contribute to the S-adenosyl-L-methionine site; that span reads SI.

This sequence belongs to the diphthine synthase family.

The protein localises to the cytoplasm. The enzyme catalyses 2-[(3S)-amino-3-carboxypropyl]-L-histidyl-[translation elongation factor 2] + 4 S-adenosyl-L-methionine = diphthine methyl ester-[translation elongation factor 2] + 4 S-adenosyl-L-homocysteine + 3 H(+). Its pathway is protein modification; peptidyl-diphthamide biosynthesis. Functionally, S-adenosyl-L-methionine-dependent methyltransferase that catalyzes four methylations of the modified target histidine residue in translation elongation factor 2 (EF-2), to form an intermediate called diphthine methyl ester. The four successive methylation reactions represent the second step of diphthamide biosynthesis. This is Diphthine methyl ester synthase (dph5) from Emericella nidulans (strain FGSC A4 / ATCC 38163 / CBS 112.46 / NRRL 194 / M139) (Aspergillus nidulans).